Reading from the N-terminus, the 727-residue chain is 1,4-alpha-glucan branching enzyme GlgB (727 aa).

The active-site Nucleophile is Asp-405. The active-site Proton donor is the Glu-458.

The protein belongs to the glycosyl hydrolase 13 family. GlgB subfamily. In terms of assembly, monomer.

The enzyme catalyses Transfers a segment of a (1-&gt;4)-alpha-D-glucan chain to a primary hydroxy group in a similar glucan chain.. It participates in glycan biosynthesis; glycogen biosynthesis. Catalyzes the formation of the alpha-1,6-glucosidic linkages in glycogen by scission of a 1,4-alpha-linked oligosaccharide from growing alpha-1,4-glucan chains and the subsequent attachment of the oligosaccharide to the alpha-1,6 position. This chain is 1,4-alpha-glucan branching enzyme GlgB, found in Yersinia pestis bv. Antiqua (strain Antiqua).